We begin with the raw amino-acid sequence, 164 residues long: Vesiculogenesis and immune response regulator (164 aa).

Could be O-mannosylated. Is likely mannosylated on Thr-61 when overexpressed in M.smegmatis.

It is found in the cell inner membrane. Its subcellular location is the cytoplasm. Virulence factor that regulates vesiculogenesis. Acts by regulating the production of mycobacterial membrane vesicles (MV) bearing Toll-like receptor 2 (TLR2) ligands, including the lipoproteins LpqH, a major host TLR2 agonist, and SodC. By restraining the release of most of the material that activates host cells through TLR2, VirR reduces the immunostimulant potential of M.tuberculosis and increases its virulence. May contribute to cell envelope integrity. In terms of biological role, when overexpressed in M.smegmatis, it modulates the production of IL-10, IL-12 p40 and TNF-alpha by RAW264.7 macrophages and it decreases the killing of M.smegmatis. The protein is Vesiculogenesis and immune response regulator of Mycobacterium tuberculosis (strain ATCC 25618 / H37Rv).